A 444-amino-acid chain; its full sequence is Trigger factor (444 aa).

The PPIase FKBP-type domain occupies 160 to 245 (DMQVTFDFEG…VKQVEKPKLP (86 aa)).

Belongs to the FKBP-type PPIase family. Tig subfamily.

The protein localises to the cytoplasm. It catalyses the reaction [protein]-peptidylproline (omega=180) = [protein]-peptidylproline (omega=0). Involved in protein export. Acts as a chaperone by maintaining the newly synthesized protein in an open conformation. Functions as a peptidyl-prolyl cis-trans isomerase. In Acinetobacter baumannii (strain AB0057), this protein is Trigger factor.